Here is a 532-residue protein sequence, read N- to C-terminus: Ankyrin repeat-containing protein At2g01680 (532 aa).

7 ANK repeats span residues 9–38 (LTHQ…GDEL), 58–89 (AGET…TVKI), 93–122 (SDMN…ELCR), 127–156 (SNTS…SCAM), 161–190 (NGKT…AIVG), 195–224 (KGQT…TILN), and 229–259 (KGNT…EVNA). A run of 4 helical transmembrane segments spans residues 354–374 (ITVV…NLPG), 396–416 (VFCL…VVQI), 436–456 (LMWA…FAVV), and 467–487 (ITLL…YFVF).

It localises to the membrane. This Arabidopsis thaliana (Mouse-ear cress) protein is Ankyrin repeat-containing protein At2g01680.